Here is a 98-residue protein sequence, read N- to C-terminus: NADH-ubiquinone oxidoreductase chain 4L (98 aa).

A run of 3 helical transmembrane segments spans residues 1-21, 29-49, and 61-81; these read MHYIYINIIIAFSMSLLGALL, SLLCLEGMMLALFVLSTLIAL, and IILLVFAACEAAIGLSLLVMV.

This sequence belongs to the complex I subunit 4L family. In terms of assembly, core subunit of respiratory chain NADH dehydrogenase (Complex I) which is composed of 45 different subunits.

It is found in the mitochondrion inner membrane. The catalysed reaction is a ubiquinone + NADH + 5 H(+)(in) = a ubiquinol + NAD(+) + 4 H(+)(out). Core subunit of the mitochondrial membrane respiratory chain NADH dehydrogenase (Complex I) which catalyzes electron transfer from NADH through the respiratory chain, using ubiquinone as an electron acceptor. Part of the enzyme membrane arm which is embedded in the lipid bilayer and involved in proton translocation. The chain is NADH-ubiquinone oxidoreductase chain 4L (MT-ND4L) from Procavia capensis (Rock hyrax).